The sequence spans 586 residues: NudC domain-containing protein 1 (586 aa).

Residues 259-278 (KDQPESSEDEKMDEDNKREP) are disordered. Residues 275-364 (KREPLYNWHQ…EPGSTWAELV (90 aa)) enclose the CS domain.

Its subcellular location is the cytoplasm. It localises to the nucleus. This is NudC domain-containing protein 1 from Xenopus tropicalis (Western clawed frog).